Here is a 251-residue protein sequence, read N- to C-terminus: Zinc import ATP-binding protein ZnuC (251 aa).

One can recognise an ABC transporter domain in the interval 5 to 220; it reads VSLENVSVSF…PEFISMFGPR (216 aa). 37-44 is an ATP binding site; it reads GPNGAGKS.

The protein belongs to the ABC transporter superfamily. Zinc importer (TC 3.A.1.15.5) family. As to quaternary structure, the complex is composed of two ATP-binding proteins (ZnuC), two transmembrane proteins (ZnuB) and a solute-binding protein (ZnuA).

It localises to the cell inner membrane. It carries out the reaction Zn(2+)(out) + ATP(in) + H2O(in) = Zn(2+)(in) + ADP(in) + phosphate(in) + H(+)(in). In terms of biological role, part of the ABC transporter complex ZnuABC involved in zinc import. Responsible for energy coupling to the transport system. The polypeptide is Zinc import ATP-binding protein ZnuC (Salmonella typhi).